Here is a 205-residue protein sequence, read N- to C-terminus: Glycerol-3-phosphate acyltransferase (205 aa).

The Periplasmic portion of the chain corresponds to 1 to 3 (MSA). A helical membrane pass occupies residues 4–24 (IAPGMILFAYLCGSISSAILV). The Cytoplasmic portion of the chain corresponds to 25-52 (CRIAGLPDPRESGSGNPGATNVLRIGGK). Residues 53 to 73 (GAAVAVLIFDILKGMLPVWGA) form a helical membrane-spanning segment. At 74–80 (YALGITP) the chain is on the periplasmic side. A helical membrane pass occupies residues 81–101 (FWLGLIAIAACLGHIWPVFFG). Over 102-111 (FKGGKGVATA) the chain is Cytoplasmic. The chain crosses the membrane as a helical span at residues 112–132 (FGAIAPIGWDLTGVIAGTWLL). Over 133–137 (TVLLS) the chain is Periplasmic. The helical transmembrane segment at 138–158 (GYSSLGAIVSALIAPFYVWWF) threads the bilayer. Topologically, residues 159–205 (KPQFTFPVSMLSCLILLRHHDNIQRLWRRQETKIWTKLKKKREKESK) are cytoplasmic.

This sequence belongs to the PlsY family. In terms of assembly, probably interacts with PlsX.

It localises to the cell inner membrane. The catalysed reaction is sn-glycerol 3-phosphate + an acyl-CoA = a 1-acyl-sn-glycero-3-phosphate + CoA. It catalyses the reaction a fatty acyl-[ACP] + sn-glycerol 3-phosphate = a 1-acyl-sn-glycero-3-phosphate + holo-[ACP]. It functions in the pathway lipid metabolism; phospholipid metabolism. In terms of biological role, catalyzes the transfer of an acyl group from acyl-ACP to glycerol-3-phosphate (G3P) to form lysophosphatidic acid (LPA). This enzyme can also utilize acyl-CoA as fatty acyl donor, but not acyl-PO(4). In Salmonella arizonae (strain ATCC BAA-731 / CDC346-86 / RSK2980), this protein is Glycerol-3-phosphate acyltransferase.